We begin with the raw amino-acid sequence, 189 residues long: Probable nicotinate-nucleotide adenylyltransferase (189 aa).

This sequence belongs to the NadD family.

The enzyme catalyses nicotinate beta-D-ribonucleotide + ATP + H(+) = deamido-NAD(+) + diphosphate. It functions in the pathway cofactor biosynthesis; NAD(+) biosynthesis; deamido-NAD(+) from nicotinate D-ribonucleotide: step 1/1. Its function is as follows. Catalyzes the reversible adenylation of nicotinate mononucleotide (NaMN) to nicotinic acid adenine dinucleotide (NaAD). The protein is Probable nicotinate-nucleotide adenylyltransferase of Staphylococcus aureus (strain MRSA252).